Here is a 475-residue protein sequence, read N- to C-terminus: ADP-ribosyltransferase toxin AexT (475 aa).

In terms of domain architecture, Bacterial Rho-GAP spans 93-226; it reads VSPEDLQRLM…LQRAVKAEVA (134 aa). One can recognise a TR mART core domain in the interval 260-436; the sequence is EGLQEQFGLE…RVLEEASLGE (177 aa). Catalysis depends on residues Arg-340, Ser-364, and Glu-403.

It is found in the secreted. Functionally, directly involved in the toxicity for RTG-2 (rainbow trout gonad) fish cells. This Aeromonas salmonicida protein is ADP-ribosyltransferase toxin AexT (aexT).